Consider the following 166-residue polypeptide: Peptidoglycan-associated lipoprotein (166 aa).

The first 21 residues, 1–21 (MEMLKFGKFAALALAMAVAVG), serve as a signal peptide directing secretion. A lipid anchor (N-palmitoyl cysteine) is attached at C22. The S-diacylglycerol cysteine moiety is linked to residue C22. Residues 54–166 (SEEAALRAIT…AQNRRVELRK (113 aa)) form the OmpA-like domain. Residues 147–166 (VATGNDEQSWAQNRRVELRK) are disordered.

Belongs to the Pal lipoprotein family. In terms of assembly, the Tol-Pal system is composed of five core proteins: the inner membrane proteins TolA, TolQ and TolR, the periplasmic protein TolB and the outer membrane protein Pal. They form a network linking the inner and outer membranes and the peptidoglycan layer.

The protein resides in the cell outer membrane. Functionally, part of the Tol-Pal system, which plays a role in outer membrane invagination during cell division and is important for maintaining outer membrane integrity. The chain is Peptidoglycan-associated lipoprotein from Pseudomonas putida (Arthrobacter siderocapsulatus).